Consider the following 333-residue polypeptide: Transaldolase NQM1 (333 aa).

Lys144 (schiff-base intermediate with substrate) is an active-site residue.

The protein belongs to the transaldolase family. Type 1 subfamily. As to quaternary structure, homodimer.

It catalyses the reaction D-sedoheptulose 7-phosphate + D-glyceraldehyde 3-phosphate = D-erythrose 4-phosphate + beta-D-fructose 6-phosphate. It functions in the pathway carbohydrate degradation; pentose phosphate pathway; D-glyceraldehyde 3-phosphate and beta-D-fructose 6-phosphate from D-ribose 5-phosphate and D-xylulose 5-phosphate (non-oxidative stage): step 2/3. Transaldolase is important for the balance of metabolites in the pentose-phosphate pathway. This is Transaldolase NQM1 (NQM1) from Saccharomyces cerevisiae (strain ATCC 204508 / S288c) (Baker's yeast).